The chain runs to 236 residues: RNA-binding protein 24 (236 aa).

Positions 11–88 (TKIFVGGLPY…RKANVNLAYL (78 aa)) constitute an RRM domain. A necessary for interaction with EIF4E region spans residues 175–199 (QYPYAASPAAAGYVTTGGYSYAVQQ).

Interacts with EIF4E; this interaction prevents EIF4E from binding to p53/TP53 mRNA and inhibits the assembly of translation initiation complex. Expressed strongly in heart and skeletal muscles. Weakly expressed in intestine, aorta, liver, lung, kidney, uterus and bladder.

The protein resides in the nucleus. Its subcellular location is the cytoplasm. Multifunctional RNA-binding protein involved in the regulation of pre-mRNA splicing, mRNA stability and mRNA translation important for cell fate decision and differentiation. Plays a major role in pre-mRNA alternative splicing regulation. Mediates preferentially muscle-specific exon inclusion in numerous mRNAs important for striated cardiac and skeletal muscle cell differentiation. Binds to intronic splicing enhancer (ISE) composed of stretches of GU-rich motifs localized in flanking intron of exon that will be included by alternative splicing. Involved in embryonic stem cell (ESC) transition to cardiac cell differentiation by promoting pre-mRNA alternative splicing events of several pluripotency and/or differentiation genes. Plays a role in the regulation of mRNA stability. Binds to 3'-untranslated region (UTR) AU-rich elements in target transcripts, such as CDKN1A and MYOG, leading to maintain their stabilities. Involved in myogenic differentiation by regulating MYOG levels. Binds to multiple regions in the mRNA 3'-UTR of TP63, hence inducing its destabilization. Also promotes the destabilization of the CHRM2 mRNA via its binding to a region in the coding sequence. Plays a role in the regulation of mRNA translation. Mediates repression of p53/TP53 mRNA translation through its binding to U-rich element in the 3'-UTR, hence preventing EIF4E from binding to p53/TP53 mRNA and translation initiation. Binds to a huge amount of mRNAs. Required for embryonic heart development, sarcomer and M-band formation in striated muscles. Together with RBM20, promotes the expression of short isoforms of PDLIM5/ENH in cardiomyocytes. The protein is RNA-binding protein 24 of Mus musculus (Mouse).